The sequence spans 532 residues: Berberine bridge enzyme-like 18 (532 aa).

The signal sequence occupies residues 1–29; the sequence is MKFQSFFSSVLIFFTTSTLLLSIPHPVSA. N-linked (GlcNAc...) asparagine glycosylation is found at N30, N33, N46, N59, N147, N169, and N262. C40 and C102 are disulfide-bonded. In terms of domain architecture, FAD-binding PCMH-type spans 80-254; that stretch reads DVPKPVLILT…LSWKIGLINV (175 aa). Positions 117–179 form a cross-link, 6-(S-cysteinyl)-8alpha-(pros-histidyl)-FAD (His-Cys); that stretch reads HDYEGLSYVT…RTLAFPAGVC (63 aa).

The protein belongs to the oxygen-dependent FAD-linked oxidoreductase family. FAD is required as a cofactor. Post-translationally, the FAD cofactor is bound via a bicovalent 6-S-cysteinyl, 8alpha-N1-histidyl FAD linkage.

The protein resides in the secreted. It is found in the cell wall. This is Berberine bridge enzyme-like 18 from Arabidopsis thaliana (Mouse-ear cress).